The following is a 204-amino-acid chain: Small ribosomal subunit protein uS7 (204 aa).

Met1 carries the post-translational modification N-acetylmethionine. Thr2 carries the post-translational modification N-acetylthreonine; in 40S ribosomal protein S5, N-terminally processed. Residue Thr14 is modified to Phosphothreonine. Lys47 is subject to N6-acetyllysine; alternate. Lys47 participates in a covalent cross-link: Glycyl lysine isopeptide (Lys-Gly) (interchain with G-Cter in SUMO2); alternate. A Phosphoserine modification is found at Ser142.

This sequence belongs to the universal ribosomal protein uS7 family. As to quaternary structure, component of the small ribosomal subunit. Part of the small subunit (SSU) processome, composed of more than 70 proteins and the RNA chaperone small nucleolar RNA (snoRNA) U3.

Its subcellular location is the cytoplasm. It localises to the nucleus. The protein localises to the nucleolus. Functionally, component of the small ribosomal subunit. The ribosome is a large ribonucleoprotein complex responsible for the synthesis of proteins in the cell. Part of the small subunit (SSU) processome, first precursor of the small eukaryotic ribosomal subunit. During the assembly of the SSU processome in the nucleolus, many ribosome biogenesis factors, an RNA chaperone and ribosomal proteins associate with the nascent pre-rRNA and work in concert to generate RNA folding, modifications, rearrangements and cleavage as well as targeted degradation of pre-ribosomal RNA by the RNA exosome. This Bos taurus (Bovine) protein is Small ribosomal subunit protein uS7 (RPS5).